We begin with the raw amino-acid sequence, 84 residues long: Small ribosomal subunit protein bS20 (84 aa).

It belongs to the bacterial ribosomal protein bS20 family.

In terms of biological role, binds directly to 16S ribosomal RNA. This Ligilactobacillus salivarius (strain UCC118) (Lactobacillus salivarius) protein is Small ribosomal subunit protein bS20.